The following is a 1894-amino-acid chain: Plexin-A2 (1894 aa).

The first 34 residues, 1 to 34, serve as a signal peptide directing secretion; that stretch reads MEQRRFYLRAMQADNLSVVLLSVAWLLLARGTTG. N-linked (GlcNAc...) asparagine glycans are attached at residues asparagine 15 and asparagine 76. The region spanning 35 to 508 is the Sema domain; it reads MPQYSTFHSE…SERQVTRVPV (474 aa). Topologically, residues 35–1237 are extracellular; sequence MPQYSTFHSE…VISDSLLTLP (1203 aa). 2 cysteine pairs are disulfide-bonded: cysteine 94–cysteine 103 and cysteine 129–cysteine 137. 2 N-linked (GlcNAc...) asparagine glycosylation sites follow: asparagine 163 and asparagine 327. Intrachain disulfides connect cysteine 284–cysteine 405, cysteine 300–cysteine 356, cysteine 374–cysteine 393, cysteine 511–cysteine 528, cysteine 517–cysteine 559, cysteine 520–cysteine 537, cysteine 531–cysteine 543, and cysteine 594–cysteine 613. N-linked (GlcNAc...) asparagine glycosylation is found at asparagine 598, asparagine 696, and asparagine 756. IPT/TIG domains lie at 858–951, 954–1037, 1041–1139, and 1143–1228; these read PQIT…QYTF, PSVL…QFEY, PRVQ…KFIY, and PTFE…SVSV. N-linked (GlcNAc...) asparagine glycosylation is found at asparagine 1180 and asparagine 1205. The chain crosses the membrane as a helical span at residues 1238–1258; sequence AIISIAAGGSLLLIIVIIVLI. Topologically, residues 1259-1894 are cytoplasmic; sequence AYKRKSREND…HLINAMSIES (636 aa). Residues 1261–1310 adopt a coiled-coil conformation; the sequence is KRKSRENDLTLKRLQMQMDNLESRVALECKEAFAELQTDINELTSDLDRS. Residue serine 1612 is modified to Phosphoserine.

It belongs to the plexin family. As to quaternary structure, homodimer. Interacts with RND1. Interacts directly with NRP1 and NRP2. The PLXNA2 homodimer interacts with a SEMA6A homodimer, giving rise to a heterotetramer.

Its subcellular location is the cell membrane. Functionally, coreceptor for SEMA3A and SEMA6A. Necessary for signaling by SEMA6A and class 3 semaphorins and subsequent remodeling of the cytoskeleton. Plays a role in axon guidance, invasive growth and cell migration. Class 3 semaphorins bind to a complex composed of a neuropilin and a plexin. The plexin modulates the affinity of the complex for specific semaphorins, and its cytoplasmic domain is required for the activation of down-stream signaling events in the cytoplasm. This chain is Plexin-A2 (Plxna2), found in Mus musculus (Mouse).